The sequence spans 346 residues: N-acetyl-gamma-glutamyl-phosphate reductase (346 aa).

The active site involves cysteine 150.

It belongs to the NAGSA dehydrogenase family. Type 1 subfamily.

It localises to the cytoplasm. The enzyme catalyses N-acetyl-L-glutamate 5-semialdehyde + phosphate + NADP(+) = N-acetyl-L-glutamyl 5-phosphate + NADPH + H(+). It participates in amino-acid biosynthesis; L-arginine biosynthesis; N(2)-acetyl-L-ornithine from L-glutamate: step 3/4. Catalyzes the NADPH-dependent reduction of N-acetyl-5-glutamyl phosphate to yield N-acetyl-L-glutamate 5-semialdehyde. The sequence is that of N-acetyl-gamma-glutamyl-phosphate reductase from Desulforamulus reducens (strain ATCC BAA-1160 / DSM 100696 / MI-1) (Desulfotomaculum reducens).